Consider the following 180-residue polypeptide: Acireductone dioxygenase (180 aa).

Residues His-97, His-99, Glu-103, and His-141 each contribute to the Fe(2+) site. Positions 97, 99, 103, and 141 each coordinate Ni(2+).

This sequence belongs to the acireductone dioxygenase (ARD) family. In terms of assembly, monomer. Requires Fe(2+) as cofactor. Ni(2+) is required as a cofactor.

It catalyses the reaction 1,2-dihydroxy-5-(methylsulfanyl)pent-1-en-3-one + O2 = 3-(methylsulfanyl)propanoate + CO + formate + 2 H(+). The enzyme catalyses 1,2-dihydroxy-5-(methylsulfanyl)pent-1-en-3-one + O2 = 4-methylsulfanyl-2-oxobutanoate + formate + 2 H(+). Its pathway is amino-acid biosynthesis; L-methionine biosynthesis via salvage pathway; L-methionine from S-methyl-5-thio-alpha-D-ribose 1-phosphate: step 5/6. Functionally, catalyzes 2 different reactions between oxygen and the acireductone 1,2-dihydroxy-3-keto-5-methylthiopentene (DHK-MTPene) depending upon the metal bound in the active site. Fe-containing acireductone dioxygenase (Fe-ARD) produces formate and 2-keto-4-methylthiobutyrate (KMTB), the alpha-ketoacid precursor of methionine in the methionine recycle pathway. Ni-containing acireductone dioxygenase (Ni-ARD) produces methylthiopropionate, carbon monoxide and formate, and does not lie on the methionine recycle pathway. The polypeptide is Acireductone dioxygenase (Yersinia enterocolitica serotype O:8 / biotype 1B (strain NCTC 13174 / 8081)).